The primary structure comprises 267 residues: Undecaprenyl-diphosphatase 1 (267 aa).

8 consecutive transmembrane segments (helical) span residues 6-26 (VLVV…AAGL), 41-60 (AALS…IYFW), 83-103 (HLLL…WLVL), 109-129 (LVGQ…LWGC), 142-162 (MSWV…VPGV), 185-205 (FSML…FWGL), 217-237 (LLMA…GMMA), and 244-264 (FVPF…LVYF).

This sequence belongs to the UppP family.

The protein localises to the cell inner membrane. The enzyme catalyses di-trans,octa-cis-undecaprenyl diphosphate + H2O = di-trans,octa-cis-undecaprenyl phosphate + phosphate + H(+). Functionally, catalyzes the dephosphorylation of undecaprenyl diphosphate (UPP). Confers resistance to bacitracin. This chain is Undecaprenyl-diphosphatase 1, found in Paramagnetospirillum magneticum (strain ATCC 700264 / AMB-1) (Magnetospirillum magneticum).